Here is a 400-residue protein sequence, read N- to C-terminus: Argininosuccinate synthase (400 aa).

Residues alanine 10–serine 18 and alanine 38 contribute to the ATP site. Tyrosine 89 contributes to the L-citrulline binding site. An ATP-binding site is contributed by glycine 119. Residues threonine 121, asparagine 125, and aspartate 126 each coordinate L-aspartate. Asparagine 125 serves as a coordination point for L-citrulline. L-citrulline is bound by residues arginine 129, serine 177, serine 186, glutamate 262, and tyrosine 274.

The protein belongs to the argininosuccinate synthase family. Type 1 subfamily. Homotetramer.

It is found in the cytoplasm. It catalyses the reaction L-citrulline + L-aspartate + ATP = 2-(N(omega)-L-arginino)succinate + AMP + diphosphate + H(+). Its pathway is amino-acid biosynthesis; L-arginine biosynthesis; L-arginine from L-ornithine and carbamoyl phosphate: step 2/3. The protein is Argininosuccinate synthase of Trichormus variabilis (strain ATCC 29413 / PCC 7937) (Anabaena variabilis).